A 196-amino-acid chain; its full sequence is Large ribosomal subunit protein eL15 (196 aa).

The segment covering 162-172 has biased composition (basic residues); sequence RGKTSAGRRAR. The tract at residues 162-196 is disordered; that stretch reads RGKTSAGRRARGLQNRGKGTEGLRPSTNADKRNKS.

The protein belongs to the eukaryotic ribosomal protein eL15 family.

The protein is Large ribosomal subunit protein eL15 of Halobacterium salinarum (strain ATCC 29341 / DSM 671 / R1).